Reading from the N-terminus, the 77-residue chain is Epoxide hydrolase (77 aa).

As to quaternary structure, monomer.

The catalysed reaction is an epoxide + H2O = an ethanediol. This enzyme acts on aliphatic epoxides. Its substrates include epichlorohydrin, epibromohydrin, epoxyoctane and styrene epoxide. The sequence is that of Epoxide hydrolase from Pseudomonas sp. (strain AD1).